The following is a 374-amino-acid chain: Peptidoglycan recognition protein 4 (374 aa).

The signal sequence occupies residues 1–20; it reads MLSWLLVFSILVLLAQGVSS. 3 N-linked (GlcNAc...) asparagine glycosylation sites follow: Asn39, Asn93, and Asn146. N-acetylmuramoyl-L-alanine amidase domains are found at residues 76–212 and 233–359; these read RPVD…KACP and PAKY…LSPG. 3 cysteine pairs are disulfide-bonded: Cys211–Cys333, Cys227–Cys271, and Cys247–Cys253. Tyr275 is a peptidoglycan binding site. 2 interaction with murein regions span residues 294 to 303 and 354 to 355; these read QGSKTDSYND and NT.

The protein belongs to the N-acetylmuramoyl-L-alanine amidase 2 family. In terms of assembly, homodimer; disulfide-linked. Heterodimer with PGLYRP3; disulfide-linked. Ubiquitous.

Its subcellular location is the secreted. Pattern receptor that binds to murein peptidoglycans (PGN) of Gram-positive bacteria. Has bactericidal activity towards Gram-positive bacteria. May kill Gram-positive bacteria by interfering with peptidoglycan biosynthesis. Also binds to Gram-negative bacteria, and has bacteriostatic activity towards Gram-negative bacteria. Plays a role in innate immunity. The chain is Peptidoglycan recognition protein 4 (Pglyrp4) from Mus musculus (Mouse).